Here is a 263-residue protein sequence, read N- to C-terminus: Small ribosomal subunit protein uS3 (263 aa).

The KH type-2 domain occupies 39 to 107 (VREYLKKKLK…PVHVNIEEIR (69 aa)). The interval 211–263 (GELPPEAATPREEERRPRRAPRGDRPDGGRPGRPGGRGRGPRKADAAPAPEGE) is disordered. Residues 219-240 (TPREEERRPRRAPRGDRPDGGR) show a composition bias toward basic and acidic residues.

The protein belongs to the universal ribosomal protein uS3 family. Part of the 30S ribosomal subunit. Forms a tight complex with proteins S10 and S14.

Its function is as follows. Binds the lower part of the 30S subunit head. Binds mRNA in the 70S ribosome, positioning it for translation. This is Small ribosomal subunit protein uS3 from Bordetella petrii (strain ATCC BAA-461 / DSM 12804 / CCUG 43448).